Consider the following 85-residue polypeptide: Large ribosomal subunit protein bL27 (85 aa).

The interval 1 to 21 is disordered; the sequence is MAHKKGQGSTQNNRDSAGRRL.

This sequence belongs to the bacterial ribosomal protein bL27 family.

This chain is Large ribosomal subunit protein bL27, found in Wolinella succinogenes (strain ATCC 29543 / DSM 1740 / CCUG 13145 / JCM 31913 / LMG 7466 / NCTC 11488 / FDC 602W) (Vibrio succinogenes).